The sequence spans 1162 residues: Leptin receptor (1162 aa).

Positions 1–21 are cleaved as a signal peptide; it reads MMCQKFYVVLLHWEFLYVIAA. The Extracellular portion of the chain corresponds to 22 to 839; the sequence is LNLAYPISPW…AIDKQQNDAG (818 aa). 5 disulfides stabilise this stretch: Cys37/Cys90, Cys89/Cys99, Cys131/Cys142, Cys186/Cys195, and Cys188/Cys193. 4 N-linked (GlcNAc...) asparagine glycosylation sites follow: Asn41, Asn56, Asn73, and Asn98. A glycan (N-linked (GlcNAc...) asparagine) is linked at Asn187. In terms of domain architecture, Fibronectin type-III 1 spans 238 to 331; the sequence is PPLGLHMEVT…SPQVFTTQDV (94 aa). 2 N-linked (GlcNAc...) asparagine glycosylation sites follow: Asn275 and Asn345. Residues 329–427 form the Ig-like domain; the sequence is QDVVYFPPKI…HRYAELYVID (99 aa). Intrachain disulfides connect Cys350/Cys410 and Cys411/Cys416. Residue Asn431 is glycosylated (N-linked (GlcNAc...) asparagine). 3 disulfides stabilise this stretch: Cys434–Cys445, Cys471–Cys526, and Cys486–Cys496. Positions 465–482 are leptin-binding; that stretch reads HRRSLYCPDSPSIHPTSE. N-linked (GlcNAc...) asparagine glycans are attached at residues Asn514, Asn622, Asn657, Asn668, Asn686, Asn695, Asn698, and Asn726. 3 Fibronectin type-III domains span residues 537–632, 637–729, and 738–832; these read PPSN…TLVM, PMRG…NLTF, and AVES…DAID. Residues 620-624 carry the WSXWS motif motif; it reads WSNWS. A helical transmembrane segment spans residues 840 to 860; that stretch reads LYVIVPIIISSCVLLLGTLLI. Topologically, residues 861 to 1162 are cytoplasmic; sequence SHQRMKKLFW…MENKMCDLTV (302 aa). The short motif at 869 to 877 is the Box 1 motif element; the sequence is FWDDVPNPK. Ser880 is modified (phosphoserine). Residues 891 to 896 form a required for JAK2 activation region; sequence ETFEHL. The interval 896-904 is required for STAT3 phosphorylation; sequence LFTKHAESV. At Tyr985 the chain carries Phosphotyrosine; by JAK2. The residue at position 1077 (Tyr1077) is a Phosphotyrosine. Tyr1138 carries the phosphotyrosine; by JAK2 modification.

The protein belongs to the type I cytokine receptor family. Type 2 subfamily. Present as a mixture of monomers and dimers. The phosphorylated receptor binds a number of SH2 domain-containing proteins such as JAK2, STAT3, PTPN11, and SOCS3. Interaction with SOCS3 inhibits JAK/STAT signaling and MAPK cascade. In terms of processing, on ligand binding, phosphorylated on two conserved C-terminal tyrosine residues (isoform B only) by JAK2. Tyr-985 is required for complete binding and activation of PTPN11, ERK/FOS activation,for interaction with SOCS3 and SOCS3 mediated inhibition of leptin signaling. Phosphorylation on Tyr-1138 is required for STAT3 binding/activation. Phosphorylation of Tyr-1077 has a more accessory role. In terms of tissue distribution, isoform A: highest level of expression in lung and kidney, also present in heart, brain, spleen, liver, muscle, choroid plexus and hypothalamus. Isoform B: highest levels of expression in hypothalamus and lower levels in brain, testes and adipose tissue. Expressed by neurons of the parabrachial nucleus. Expressed by peripheral blood mononuclear cells and CD4(+) T-cells. Isoform E: expressed in adipose tissue, liver, hypothalamus, cerebral microvessels, heart, and testes.

The protein localises to the cell membrane. It localises to the basolateral cell membrane. Its subcellular location is the secreted. Its function is as follows. Receptor for hormone LEP/leptin. On ligand binding, mediates LEP central and peripheral effects through the activation of different signaling pathways such as JAK2/STAT3 and MAPK cascade/FOS. In the hypothalamus, LEP acts as an appetite-regulating factor that induces a decrease in food intake and an increase in energy consumption by inducing anorexinogenic factors and suppressing orexigenic neuropeptides, also regulates bone mass and secretion of hypothalamo-pituitary-adrenal hormones. In the periphery, increases basal metabolism, influences reproductive function, regulates pancreatic beta-cell function and insulin secretion, is pro-angiogenic and affects innate and adaptive immunity. Control of energy homeostasis and melanocortin production (stimulation of POMC and full repression of AgRP transcription) is mediated by STAT3 signaling, whereas distinct signals regulate NPY and the control of fertility, growth and glucose homeostasis. Involved in the regulation of counter-regulatory response to hypoglycemia by inhibiting neurons of the parabrachial nucleus. Has a specific effect on T lymphocyte responses, differentially regulating the proliferation of naive and memory T-cells. Leptin increases Th1 and suppresses Th2 cytokine production. In terms of biological role, may transport LEP across the blood-brain barrier. Binds LEP and mediates LEP endocytosis. Does not induce phosphorylation of and activate STAT3. Antagonizes Isoform A and isoform B-mediated LEP binding and endocytosis. This chain is Leptin receptor (Lepr), found in Mus musculus (Mouse).